The chain runs to 971 residues: GEM-interacting protein (971 aa).

A Phosphoserine modification is found at Ser-19. 3 disordered regions span residues 41 to 79 (AGDP…PEGP), 231 to 267 (LRAR…AQAK), and 383 to 476 (DTKK…IENG). Basic and acidic residues predominate over residues 44-56 (PVRREDLEPDKAD). Polar residues predominate over residues 59 to 69 (TVVTEENSEAS). Phosphoserine occurs at positions 75, 235, 238, 247, 436, and 440. An F-BAR domain is found at 85 to 348 (EELDLRLIRT…CCVPFEPGQR (264 aa)). Positions 458–471 (SSDDFEERDPDLGD) are enriched in acidic residues. The Phorbol-ester/DAG-type zinc-finger motif lies at 492 to 536 (THRLRRLRGPAKCRECEAFMVSGTECEECFLTCHKRCLETLLILC). The Rho-GAP domain maps to 553–756 (LQLPRDFPEE…FLIVHYEQIF (204 aa)). Position 659 is a phosphothreonine (Thr-659). A disordered region spans residues 799 to 865 (IALDSSPDPK…LGAQSRGHFS (67 aa)). Residues 805-817 (PDPKHHSALEKCP) show a composition bias toward basic and acidic residues. Ser-884, Ser-908, and Ser-924 each carry phosphoserine.

In terms of assembly, interacts with GEM through its N-terminal.

Its function is as follows. Stimulates, in vitro and in vivo, the GTPase activity of RhoA. This chain is GEM-interacting protein (Gmip), found in Mus musculus (Mouse).